The primary structure comprises 380 residues: Interleukin-13 receptor subunit alpha-2 (380 aa).

An N-terminal signal peptide occupies residues 1–26 (MAFVCLAIGCLYTFLISTTFGCTSSS). At 27-343 (DTEIKVNPPQ…EDLSKKTLLR (317 aa)) the chain is on the extracellular side. Fibronectin type-III domains follow at residues 34–134 (PPQD…SPQG), 139–235 (KVQD…LQNI), and 240–333 (PPVY…CWEG). Cys65 and Cys113 form a disulfide bridge. The N-linked (GlcNAc...) asparagine glycan is linked to Asn115. 2 disulfide bridges follow: Cys145–Cys155 and Cys184–Cys197. N-linked (GlcNAc...) asparagine glycans are attached at residues Asn215, Asn290, and Asn299. Cys269 and Cys316 are disulfide-bonded. Residues 322–326 (WSEWS) carry the WSXWS motif motif. A helical transmembrane segment spans residues 344–363 (FWLPFGFILILVIFVTGLLL). At 364–380 (RKPNTYPKMIPEFFCDT) the chain is on the cytoplasmic side.

This sequence belongs to the type I cytokine receptor family. Type 5 subfamily. Interacts with IL4RA. Interacts with high affinity to interleukin-13 (IL13), but not to interleukin-4 (IL4). In terms of processing, cleaved by MMP8 leading to a soluble form that is also able to interact with IL13.

The protein localises to the cell membrane. Functionally, cell surface receptor that plays a role in the regulation of IL-13-mediated responses. Functions as a decoy receptor that inhibits IL-13- and IL-4-mediated signal transduction via the JAK-STAT pathway and thereby modulates immune responses and inflammation. Serves as a functional signaling receptor for IL-13 in an alternative pathway involving AP-1 ultimately leading to the production of TGFB1. This chain is Interleukin-13 receptor subunit alpha-2 (IL13RA2), found in Homo sapiens (Human).